The sequence spans 394 residues: Probable peptidoglycan glycosyltransferase FtsW (394 aa).

Topologically, residues 1–26 (MNTMRPRHLNQRGKPVSRPISLYDKW) are cytoplasmic. Residues 27–47 (LIGAVFGLLIIGLMMVASSSV) traverse the membrane as a helical segment. At 48-57 (MISTKYFHQP) the chain is on the periplasmic side. A helical membrane pass occupies residues 58-78 (FHFLIRQACYLFVGLLLALIV). Residues 79–88 (VRTDSSFWEK) are Cytoplasmic-facing. The helical transmembrane segment at 89–109 (ISMPMMIGCVFLLLIVLIPGI) threads the bilayer. The Periplasmic segment spans residues 110-118 (GKSVNGSRR). Residues 119–139 (WLALGPIGVQVSELTKLAMIF) traverse the membrane as a helical segment. Residues 140–154 (YLSGYLVRQQEAVCE) are Cytoplasmic-facing. A helical membrane pass occupies residues 155 to 175 (SIFGFIKPMAILAVVSVLLLL). Residues 176 to 177 (EP) are Periplasmic-facing. Residues 178-198 (DFGATVVISGTVMAMLFLAGV) form a helical membrane-spanning segment. Residues 199–201 (KLR) are Cytoplasmic-facing. Residues 202-222 (YYFGLMLVVVTALALLAVSSP) traverse the membrane as a helical segment. Residues 223-278 (YRVARLTAFLDPWADQYNSGYQLTQSLIAFGRGGWFGTGLGESIQKLLYLPEAHTD) are Periplasmic-facing. The chain crosses the membrane as a helical span at residues 279 to 299 (FLFAVIAEELGLFGILVVITL). Residues 300 to 327 (YSILVIRGLNIGYTAYTQERHFASYTAY) are Cytoplasmic-facing. A helical transmembrane segment spans residues 328 to 348 (GLTIWLALQASINMGVNAGLL). Topologically, residues 349 to 354 (PTKGLT) are periplasmic. The chain crosses the membrane as a helical span at residues 355–375 (LPLLSYGGASMVINCIVIALL). Residues 376 to 394 (LRIDHENRWQSLGLRPLTA) are Cytoplasmic-facing.

This sequence belongs to the SEDS family. FtsW subfamily.

The protein localises to the cell inner membrane. The enzyme catalyses [GlcNAc-(1-&gt;4)-Mur2Ac(oyl-L-Ala-gamma-D-Glu-L-Lys-D-Ala-D-Ala)](n)-di-trans,octa-cis-undecaprenyl diphosphate + beta-D-GlcNAc-(1-&gt;4)-Mur2Ac(oyl-L-Ala-gamma-D-Glu-L-Lys-D-Ala-D-Ala)-di-trans,octa-cis-undecaprenyl diphosphate = [GlcNAc-(1-&gt;4)-Mur2Ac(oyl-L-Ala-gamma-D-Glu-L-Lys-D-Ala-D-Ala)](n+1)-di-trans,octa-cis-undecaprenyl diphosphate + di-trans,octa-cis-undecaprenyl diphosphate + H(+). The protein operates within cell wall biogenesis; peptidoglycan biosynthesis. In terms of biological role, peptidoglycan polymerase that is essential for cell division. In Legionella pneumophila subsp. pneumophila (strain Philadelphia 1 / ATCC 33152 / DSM 7513), this protein is Probable peptidoglycan glycosyltransferase FtsW.